The chain runs to 274 residues: Large ribosomal subunit protein uL2 (274 aa).

A disordered region spans residues 223 to 256 (VVMNPVDHPHGGGEGKTGEGRHPVDPWGNLTKGY). The span at 229 to 246 (DHPHGGGEGKTGEGRHPV) shows a compositional bias: basic and acidic residues.

It belongs to the universal ribosomal protein uL2 family. In terms of assembly, part of the 50S ribosomal subunit. Forms a bridge to the 30S subunit in the 70S ribosome.

Functionally, one of the primary rRNA binding proteins. Required for association of the 30S and 50S subunits to form the 70S ribosome, for tRNA binding and peptide bond formation. It has been suggested to have peptidyltransferase activity; this is somewhat controversial. Makes several contacts with the 16S rRNA in the 70S ribosome. In Albidiferax ferrireducens (strain ATCC BAA-621 / DSM 15236 / T118) (Rhodoferax ferrireducens), this protein is Large ribosomal subunit protein uL2.